The following is a 115-amino-acid chain: Ribonuclease P protein component (115 aa).

This sequence belongs to the RnpA family. Consists of a catalytic RNA component (M1 or rnpB) and a protein subunit.

It catalyses the reaction Endonucleolytic cleavage of RNA, removing 5'-extranucleotides from tRNA precursor.. In terms of biological role, RNaseP catalyzes the removal of the 5'-leader sequence from pre-tRNA to produce the mature 5'-terminus. It can also cleave other RNA substrates such as 4.5S RNA. The protein component plays an auxiliary but essential role in vivo by binding to the 5'-leader sequence and broadening the substrate specificity of the ribozyme. The polypeptide is Ribonuclease P protein component (Bacillus mycoides (strain KBAB4) (Bacillus weihenstephanensis)).